The chain runs to 82 residues: UPF0437 protein in nifX-nifW intergenic region (82 aa).

The protein belongs to the UPF0437 family.

This chain is UPF0437 protein in nifX-nifW intergenic region, found in Frankia alni.